Consider the following 300-residue polypeptide: Cytochrome f (300 aa).

The N-terminal stretch at 1-32 (MMTYLSKQFSKLLFGQLLFLFIGNLLLKPVQA) is a signal peptide. Residues Tyr33, Cys53, Cys56, and His57 each contribute to the heme site. Residues 267-287 (LKTFIAFCVTVFIGQLAFVLK) form a helical membrane-spanning segment.

The protein belongs to the cytochrome f family. In terms of assembly, the 4 large subunits of the cytochrome b6-f complex are cytochrome b6, subunit IV (17 kDa polypeptide, petD), cytochrome f and the Rieske protein, while the 4 small subunits are PetG, PetL, PetM and PetN. The complex functions as a dimer. Heme is required as a cofactor.

It is found in the plastid. The protein localises to the chloroplast thylakoid membrane. Component of the cytochrome b6-f complex, which mediates electron transfer between photosystem II (PSII) and photosystem I (PSI), cyclic electron flow around PSI, and state transitions. The protein is Cytochrome f of Cyanidioschyzon merolae (strain NIES-3377 / 10D) (Unicellular red alga).